Reading from the N-terminus, the 94-residue chain is DNA-directed RNA polymerase subunit omega (94 aa).

This sequence belongs to the RNA polymerase subunit omega family. As to quaternary structure, the RNAP catalytic core consists of 2 alpha, 1 beta, 1 beta' and 1 omega subunit. When a sigma factor is associated with the core the holoenzyme is formed, which can initiate transcription.

The enzyme catalyses RNA(n) + a ribonucleoside 5'-triphosphate = RNA(n+1) + diphosphate. Functionally, promotes RNA polymerase assembly. Latches the N- and C-terminal regions of the beta' subunit thereby facilitating its interaction with the beta and alpha subunits. This Parafrankia sp. (strain EAN1pec) protein is DNA-directed RNA polymerase subunit omega.